A 140-amino-acid polypeptide reads, in one-letter code: Profilin-2 (140 aa).

An N-acetylalanine modification is found at Ala-2.

The protein belongs to the profilin family. Occurs in many kinds of cells as a complex with monomeric actin in a 1:1 ratio. Interacts with PFN2. Interacts with ACTMAP (via N-terminus); the interaction may facilitate efficient cleavage of the acetylated N-terminus of immature actin by ACTMAP.

The protein localises to the cytoplasm. It localises to the cytoskeleton. Binds to actin and affects the structure of the cytoskeleton. At high concentrations, profilin prevents the polymerization of actin, whereas it enhances it at low concentrations. By binding to PIP2, it inhibits the formation of IP3 and DG. The chain is Profilin-2 (PFN2) from Bos taurus (Bovine).